The sequence spans 256 residues: Triosephosphate isomerase (256 aa).

Substrate is bound at residue 10-12 (NWK). The Electrophile role is filled by His-97. Glu-169 (proton acceptor) is an active-site residue. Substrate-binding positions include Gly-175, Ser-214, and 235–236 (GG).

Belongs to the triosephosphate isomerase family. In terms of assembly, homodimer.

Its subcellular location is the cytoplasm. It carries out the reaction D-glyceraldehyde 3-phosphate = dihydroxyacetone phosphate. The protein operates within carbohydrate biosynthesis; gluconeogenesis. It functions in the pathway carbohydrate degradation; glycolysis; D-glyceraldehyde 3-phosphate from glycerone phosphate: step 1/1. Involved in the gluconeogenesis. Catalyzes stereospecifically the conversion of dihydroxyacetone phosphate (DHAP) to D-glyceraldehyde-3-phosphate (G3P). The sequence is that of Triosephosphate isomerase from Haemophilus ducreyi (strain 35000HP / ATCC 700724).